Here is a 132-residue protein sequence, read N- to C-terminus: Small ribosomal subunit protein uS8 (132 aa).

The protein belongs to the universal ribosomal protein uS8 family. As to quaternary structure, part of the 30S ribosomal subunit. Contacts proteins S5 and S12.

Functionally, one of the primary rRNA binding proteins, it binds directly to 16S rRNA central domain where it helps coordinate assembly of the platform of the 30S subunit. This chain is Small ribosomal subunit protein uS8, found in Lactobacillus helveticus (strain DPC 4571).